Reading from the N-terminus, the 166-residue chain is Heme-degrading monooxygenase HmoB (166 aa).

Asn33 serves as a coordination point for Fe cation. Residues 66-153 form the ABM domain; it reads FAVLNNIAVT…SAGIDTTSIF (88 aa). His138 contacts heme.

Belongs to the antibiotic biosynthesis monooxygenase family. Homodimer.

The protein localises to the cytoplasm. It carries out the reaction heme b + 3 reduced [NADPH--hemoprotein reductase] + 3 O2 = biliverdin IXalpha + CO + Fe(2+) + 3 oxidized [NADPH--hemoprotein reductase] + 3 H2O + H(+). Functionally, catalyzes the oxidative degradation of the heme macrocyclic porphyrin ring in the presence of a suitable electron donor such as ascorbate or NADPH--cytochrome P450 reductase, with subsequent release of free iron. The chain is Heme-degrading monooxygenase HmoB (hmoB) from Bacillus subtilis (strain 168).